We begin with the raw amino-acid sequence, 132 residues long: Small ribosomal subunit protein uS8 (132 aa).

Belongs to the universal ribosomal protein uS8 family. In terms of assembly, part of the 30S ribosomal subunit. Contacts proteins S5 and S12.

One of the primary rRNA binding proteins, it binds directly to 16S rRNA central domain where it helps coordinate assembly of the platform of the 30S subunit. The sequence is that of Small ribosomal subunit protein uS8 from Rubrobacter xylanophilus (strain DSM 9941 / JCM 11954 / NBRC 16129 / PRD-1).